Consider the following 372-residue polypeptide: Cytochrome b (372 aa).

Transmembrane regions (helical) follow at residues 29–49, 73–95, 108–128, and 174–194; these read FGSMLGLIYSIQIISGLILSW, WFIRFIHSSGVSLFMFIMYLHIL, VWYSGILLLFICMGSAFLGYV, and FFSFHYLLSLFIMVFILIHLI. Heme b is bound by residues histidine 79 and histidine 93. Residues histidine 178 and histidine 192 each coordinate heme b. An a ubiquinone-binding site is contributed by histidine 197. A run of 4 helical transmembrane segments spans residues 220–240, 284–301, 311–336, and 344–363; these read FSLKDTLVFVLVVFLYWFCIF, LGGVILMVMAILMLVFLG, MVKTLYWKLMLSSFLLVFIILTIMGG, and DILGNVNSVLYFFIYVIMLL.

It belongs to the cytochrome b family. The main subunits of complex b-c1 are: cytochrome b, cytochrome c1 and the Rieske protein. Heme b is required as a cofactor.

It localises to the mitochondrion inner membrane. Functionally, component of the ubiquinol-cytochrome c reductase complex (complex III or cytochrome b-c1 complex) that is part of the mitochondrial respiratory chain. The b-c1 complex mediates electron transfer from ubiquinol to cytochrome c. Contributes to the generation of a proton gradient across the mitochondrial membrane that is then used for ATP synthesis. In Leptorhynchoides thecatus (Thorny-headed worm), this protein is Cytochrome b (mt:Cyt-b).